Reading from the N-terminus, the 64-residue chain is Relaxin (64 aa).

Intrachain disulfides connect C11–C51, C23–C64, and C50–C55.

It belongs to the insulin family. Heterodimer of a B chain and an A chain linked by two disulfide bonds.

It localises to the secreted. This Leucoraja erinaceus (Little skate) protein is Relaxin.